The primary structure comprises 197 residues: Imidazoleglycerol-phosphate dehydratase (197 aa).

The protein belongs to the imidazoleglycerol-phosphate dehydratase family.

It is found in the cytoplasm. The catalysed reaction is D-erythro-1-(imidazol-4-yl)glycerol 3-phosphate = 3-(imidazol-4-yl)-2-oxopropyl phosphate + H2O. It functions in the pathway amino-acid biosynthesis; L-histidine biosynthesis; L-histidine from 5-phospho-alpha-D-ribose 1-diphosphate: step 6/9. The polypeptide is Imidazoleglycerol-phosphate dehydratase (Rhodopseudomonas palustris (strain TIE-1)).